The following is a 147-amino-acid chain: UPF0306 protein YhbP (147 aa).

This sequence belongs to the UPF0306 family.

The sequence is that of UPF0306 protein YhbP from Salmonella schwarzengrund (strain CVM19633).